We begin with the raw amino-acid sequence, 196 residues long: GTP cyclohydrolase 1 (196 aa).

Zn(2+) is bound by residues Cys84, His87, and Cys157.

The protein belongs to the GTP cyclohydrolase I family. As to quaternary structure, toroid-shaped homodecamer, composed of two pentamers of five dimers.

It catalyses the reaction GTP + H2O = 7,8-dihydroneopterin 3'-triphosphate + formate + H(+). Its pathway is cofactor biosynthesis; 7,8-dihydroneopterin triphosphate biosynthesis; 7,8-dihydroneopterin triphosphate from GTP: step 1/1. The polypeptide is GTP cyclohydrolase 1 (Corynebacterium glutamicum (strain ATCC 13032 / DSM 20300 / JCM 1318 / BCRC 11384 / CCUG 27702 / LMG 3730 / NBRC 12168 / NCIMB 10025 / NRRL B-2784 / 534)).